The following is a 451-amino-acid chain: UPF0210 protein LMOf2365_0563 (451 aa).

Belongs to the UPF0210 family. In terms of assembly, homodimer.

The polypeptide is UPF0210 protein LMOf2365_0563 (Listeria monocytogenes serotype 4b (strain F2365)).